The following is a 232-amino-acid chain: MLEAKSAALLEDTIDYVFDNQALLLEALTHKSFSNEQNDRTEPDNERLEFLGDAVLGVVVSHYIFRTFPHLPEGELTRIRSEVVSEKGLTVIGKAICLGDYMRLGKGEERSGGRQKSSLLANTMEALLGAVFCDGGFDSVRRVIEALFIPHIQRAARRKTGVDYKTRLQERLQARFGDVPQYVLIHADGPPHQRSYSVEAHFRGSCIGQGQGRSKKSAEQAAAKQALEYLEE.

Positions 7–136 (AALLEDTIDY…LLGAVFCDGG (130 aa)) constitute an RNase III domain. Glutamate 49 contributes to the Mg(2+) binding site. Aspartate 53 is an active-site residue. Residues asparagine 122 and glutamate 125 each coordinate Mg(2+). The active site involves glutamate 125. The DRBM domain occupies 163–232 (DYKTRLQERL…AKQALEYLEE (70 aa)).

The protein belongs to the ribonuclease III family. In terms of assembly, homodimer. Mg(2+) is required as a cofactor.

It is found in the cytoplasm. It catalyses the reaction Endonucleolytic cleavage to 5'-phosphomonoester.. In terms of biological role, digests double-stranded RNA. Involved in the processing of primary rRNA transcript to yield the immediate precursors to the large and small rRNAs (23S and 16S). Processes some mRNAs, and tRNAs when they are encoded in the rRNA operon. Processes pre-crRNA and tracrRNA of type II CRISPR loci if present in the organism. The protein is Ribonuclease 3 of Syntrophotalea carbinolica (strain DSM 2380 / NBRC 103641 / GraBd1) (Pelobacter carbinolicus).